A 340-amino-acid chain; its full sequence is Zinc finger protein 367 (340 aa).

The tract at residues 96-140 (LPTLRGAPPSSASVAAVSGGEDEEEASSPDSGHLKDGIRRGRPRA) is disordered. The span at 101–114 (GAPPSSASVAAVSG) shows a compositional bias: low complexity. Residues 127 to 140 (GHLKDGIRRGRPRA) show a composition bias toward basic and acidic residues. 2 C2H2-type zinc fingers span residues 157–179 (IRCN…KRTH) and 185–209 (YLCD…QRLH). The disordered stretch occupies residues 280–317 (KGKLVQKADQEQQDPLEYLQSDEEDDEKSGAQRRLQEQ). Positions 299–332 (QSDEEDDEKSGAQRRLQEQRERLHGALALIELAN) form a coiled coil. Ser-300 is modified (phosphoserine). Over residues 307–317 (KSGAQRRLQEQ) the composition is skewed to basic and acidic residues.

This sequence belongs to the krueppel C2H2-type zinc-finger protein family.

The protein localises to the nucleus. Functionally, transcriptional activator. May be involved in transcriptional activation of erythroid genes. This chain is Zinc finger protein 367 (Znf367), found in Rattus norvegicus (Rat).